Here is a 291-residue protein sequence, read N- to C-terminus: MAEQKKQLLIVTGMSGAGKTVAIKALEDMGYFVVDNLPPELLGSFWELINNSSDFSKAAVVVDLRVKSFYKDLVDEIKSLEDSQNVQSTVLFLDASDDVLVSRYKETRRLPPLAHTGRLLDGIQEERAILSRTKNISNIIIDTSRLTTKELKAKLVDKFGDNQTRTFSIEVMSFGFKYGIPIDADIVMDVRFLPNPFYIPQLKPFTGLDRRVFDYVMSKKETKKFYAKFLDMLETAIPGYIAEGKEKLTIAIGCTGGQHRSVSIARQLAVDLAKKYPVDISHREISRYIGQ.

ATP is bound at residue 13–20; the sequence is GMSGAGKT. Residue 63 to 66 coordinates GTP; it reads DLRV.

Belongs to the RapZ-like family.

Functionally, displays ATPase and GTPase activities. The sequence is that of Nucleotide-binding protein LGAS_1315 from Lactobacillus gasseri (strain ATCC 33323 / DSM 20243 / BCRC 14619 / CIP 102991 / JCM 1131 / KCTC 3163 / NCIMB 11718 / NCTC 13722 / AM63).